Reading from the N-terminus, the 504-residue chain is Alpha,alpha-trehalose-phosphate synthase [UDP-forming] (504 aa).

D-glucose 6-phosphate contacts are provided by Y97 and D151. UDP-binding residues include R287 and K292. Positions 287 and 292 each coordinate UDP-alpha-D-glucose. R325 is a binding site for D-glucose 6-phosphate. 386–394 (DGMNLVSYE) contributes to the UDP-alpha-D-glucose binding site. 390 to 394 (LVSYE) contacts UDP. The tract at residues 482-504 (AGKLPTKETPVNGETSKLETSSQ) is disordered. Residues 493–504 (NGETSKLETSSQ) show a composition bias toward polar residues.

The protein belongs to the glycosyltransferase 20 family.

The enzyme catalyses D-glucose 6-phosphate + UDP-alpha-D-glucose = alpha,alpha-trehalose 6-phosphate + UDP + H(+). Its pathway is carbohydrate biosynthesis. Synthase catalytic subunit of the trehalose synthase complex that catalyzes the production of trehalose from glucose-6-phosphate and UDP-alpha-D-glucose in a two step process. The protein is Alpha,alpha-trehalose-phosphate synthase [UDP-forming] (tpsA) of Emericella nidulans (strain FGSC A4 / ATCC 38163 / CBS 112.46 / NRRL 194 / M139) (Aspergillus nidulans).